The following is a 397-amino-acid chain: Plasma membrane iron permease (397 aa).

Transmembrane regions (helical) follow at residues 61–81 (FTAL…FYAL), 92–112 (IWEG…GFAM), 177–197 (AFPL…YFIY), and 292–312 (GSIL…FLMW). Ser337 and Ser338 each carry phosphoserine. The span at 337 to 346 (SSHTPVQSSS) shows a compositional bias: polar residues. The tract at residues 337-364 (SSHTPVQSSSSEDEFKINSPTDDKGDKA) is disordered. A Phosphothreonine modification is found at Thr340. Residues Ser346, Ser347, and Ser355 each carry the phosphoserine modification. Positions 349–364 (DEFKINSPTDDKGDKA) are enriched in basic and acidic residues. A Phosphothreonine modification is found at Thr357. Residues Ser374, Ser375, and Ser376 each carry the phosphoserine modification.

The protein belongs to the oxidase-dependent Fe transporter (OFeT) (TC 9.A.10.1) family.

The protein resides in the membrane. In terms of biological role, permease for high affinity iron uptake. The polypeptide is Plasma membrane iron permease (fip1) (Schizosaccharomyces pombe (strain 972 / ATCC 24843) (Fission yeast)).